A 333-amino-acid polypeptide reads, in one-letter code: Ribosomal RNA small subunit methyltransferase C (333 aa).

Belongs to the methyltransferase superfamily. RsmC family. Monomer.

Its subcellular location is the cytoplasm. It carries out the reaction guanosine(1207) in 16S rRNA + S-adenosyl-L-methionine = N(2)-methylguanosine(1207) in 16S rRNA + S-adenosyl-L-homocysteine + H(+). In terms of biological role, specifically methylates the guanine in position 1207 of 16S rRNA in the 30S particle. The protein is Ribosomal RNA small subunit methyltransferase C of Chromohalobacter salexigens (strain ATCC BAA-138 / DSM 3043 / CIP 106854 / NCIMB 13768 / 1H11).